The sequence spans 130 residues: Small ribosomal subunit protein uS9 (130 aa).

Belongs to the universal ribosomal protein uS9 family.

The sequence is that of Small ribosomal subunit protein uS9 from Methylococcus capsulatus (strain ATCC 33009 / NCIMB 11132 / Bath).